The primary structure comprises 340 residues: PRKC apoptosis WT1 regulator protein (340 aa).

The span at 1 to 18 (MATGGYRTSSGLGGSTTD) shows a compositional bias: polar residues. The tract at residues 1 to 253 (MATGGYRTSS…TDRSGFPRYN (253 aa)) is disordered. Residues 47–82 (SDAAGKPPAGALGTPAAAAANELNNNLPGGAPAAPA) show a composition bias toward low complexity. The B30.2/SPRY domain-binding motif motif lies at 68–72 (ELNNN). Ser-108 bears the Phosphoserine mark. A Nuclear localization signal motif is present at residues 145–161 (RKGKGQIEKRKLREKRR). Residues 145-203 (RKGKGQIEKRKLREKRRSTGVVNIPAAECLDEYEDDEAGQKERKREDAITQQNTIQNEA) are selective for apoptosis induction in cancer cells (SAC). Thr-163 carries the post-translational modification Phosphothreonine; by PKA. Residues 182–192 (AGQKERKREDA) show a composition bias toward basic and acidic residues. The stretch at 186-206 (ERKREDAITQQNTIQNEAVNL) forms a coiled coil. A compositionally biased stretch (polar residues) spans 193–203 (ITQQNTIQNEA). Phosphoserine is present on Ser-231. Basic and acidic residues predominate over residues 242 to 253 (SRTDRSGFPRYN). A leucine-zipper region spans residues 300–340 (IGKLKEEIDLLNRDLDDIEDENEQLKQENKTLLKVVGQLTR).

In terms of assembly, homooligomer. Interacts (via the C-terminal region) with WT1. Interacts with THAP1. Interacts with AATF. Interacts with BACE1. Interacts with SPSB1 (via B30.2/SPRY domain); this interaction is direct and occurs in association with the Elongin BC complex. Interacts with SPSB2 (via B30.2/SPRY domain); this interaction occurs in association with the Elongin BC complex. Interacts with SPSB4 (via B30.2/SPRY domain); this interaction occurs in association with the Elongin BC complex. Component of a ternary complex composed of SQSTM1 and PRKCZ. Interacts with actin. Post-translationally, preferentially phosphorylated at the Thr-163 by PKC in cancer cells. As to expression, widely expressed. Expression is elevated in various neurodegenerative diseases such as amyotrophic lateral sclerosis, Alzheimer, Parkinson and Huntington diseases and stroke. Down-regulated in several cancers.

It localises to the cytoplasm. Its subcellular location is the nucleus. Pro-apoptotic protein capable of selectively inducing apoptosis in cancer cells, sensitizing the cells to diverse apoptotic stimuli and causing regression of tumors in animal models. Induces apoptosis in certain cancer cells by activation of the Fas prodeath pathway and coparallel inhibition of NF-kappa-B transcriptional activity. Inhibits the transcriptional activation and augments the transcriptional repression mediated by WT1. Down-regulates the anti-apoptotic protein BCL2 via its interaction with WT1. Also seems to be a transcriptional repressor by itself. May be directly involved in regulating the amyloid precursor protein (APP) cleavage activity of BACE1. This is PRKC apoptosis WT1 regulator protein (PAWR) from Homo sapiens (Human).